A 372-amino-acid chain; its full sequence is Saccharopine dehydrogenase [NAD(+), L-lysine-forming] (372 aa).

The L-saccharopine site is built by arginine 17 and lysine 76. Lysine 76 serves as the catalytic Proton acceptor. Histidine 95 serves as the catalytic Proton donor. Glutamine 100 provides a ligand contact to L-saccharopine. Arginine 129 lines the NAD(+) pocket. The L-saccharopine site is built by arginine 130 and phenylalanine 134. Residues 202 to 203 (GR), aspartate 226, threonine 230, tyrosine 250, and valine 277 each bind NAD(+). A disulfide bridge connects residues cysteine 204 and cysteine 248. 278 to 280 (SAD) lines the L-saccharopine pocket. 317-320 (IDHL) is an NAD(+) binding site. A Microbody targeting signal motif is present at residues 370–372 (SKL).

It belongs to the AlaDH/PNT family. In terms of assembly, monomer.

The protein resides in the peroxisome. It carries out the reaction L-saccharopine + NAD(+) + H2O = L-lysine + 2-oxoglutarate + NADH + H(+). It participates in amino-acid biosynthesis; L-lysine biosynthesis via AAA pathway; L-lysine from L-alpha-aminoadipate (fungal route): step 3/3. Functionally, catalyzes the NAD(+)-dependent cleavage of saccharopine to L-lysine and 2-oxoglutarate, the final step in the alpha-aminoadipate (AAA) pathway for lysin biosynthesis. The chain is Saccharopine dehydrogenase [NAD(+), L-lysine-forming] (LYS1) from Candida glabrata (strain ATCC 2001 / BCRC 20586 / JCM 3761 / NBRC 0622 / NRRL Y-65 / CBS 138) (Yeast).